Here is a 265-residue protein sequence, read N- to C-terminus: Molybdenum-pterin-binding protein MopA (265 aa).

Mop domains are found at residues 126–192 (RTSN…MLAA) and 198–264 (RISA…ILAM).

It belongs to the ModE family.

The sequence is that of Molybdenum-pterin-binding protein MopA (mopA) from Rhodobacter capsulatus (Rhodopseudomonas capsulata).